The following is an 837-amino-acid chain: E3 ubiquitin-protein ligase bre-1 (837 aa).

Positions 1–33 (MMKRSNEGIGGENYASSPSDDGQQKRRKIQFEP) are disordered. The tract at residues 1 to 313 (MMKRSNEGIG…AKEIENLRLE (313 aa)) is interaction with ubc-1. 2 coiled-coil regions span residues 54–89 (TSKL…ESNF) and 185–253 (HKEL…KHMR). The interval 269–302 (GQSGGNGGATPSSSGTTNATEKKISAPDIPPSET) is disordered. The segment covering 277 to 287 (ATPSSSGTTNA) has biased composition (polar residues). Coiled coils occupy residues 300 to 397 (SETA…AFRS), 458 to 651 (DEMK…KAQT), and 677 to 763 (VQFK…NESV). An RING-type zinc finger spans residues 785–824 (CPSCKTRPKDCIMLKCYHLFCETCIKTMYDTRQRKCPKCN).

The protein belongs to the BRE1 family. As to quaternary structure, interacts with ubc-1. Interacts with mrg-1. As to expression, in adult animals, expressed in oocytes, germ cells, pharyngeal and intestinal cells.

The protein localises to the nucleus. The catalysed reaction is S-ubiquitinyl-[E2 ubiquitin-conjugating enzyme]-L-cysteine + [acceptor protein]-L-lysine = [E2 ubiquitin-conjugating enzyme]-L-cysteine + N(6)-ubiquitinyl-[acceptor protein]-L-lysine.. It participates in protein modification; protein ubiquitination. Functionally, E3 ubiquitin-protein ligase that mediates monoubiquitination of 'Lys-117' of histone H2B. H2B 'Lys-117' ubiquitination gives a specific tag for epigenetic transcriptional activation and is also prerequisite for histone H3 'Lys-4' and 'Lys-79' methylation. Involved in regulating stem cell proliferative fate. In Caenorhabditis elegans, this protein is E3 ubiquitin-protein ligase bre-1 (rfp-1).